The sequence spans 362 residues: 3-isopropylmalate dehydrogenase (362 aa).

An NAD(+)-binding site is contributed by 78 to 91; that stretch reads GYKWDSLPPHQRPE. Substrate-binding residues include R98, R108, R136, and D226. Positions 226, 250, and 254 each coordinate Mg(2+). An NAD(+)-binding site is contributed by 284–296; the sequence is GSAPDIAGLDKAN.

It belongs to the isocitrate and isopropylmalate dehydrogenases family. LeuB type 1 subfamily. As to quaternary structure, homodimer. It depends on Mg(2+) as a cofactor. The cofactor is Mn(2+).

It is found in the cytoplasm. It carries out the reaction (2R,3S)-3-isopropylmalate + NAD(+) = 4-methyl-2-oxopentanoate + CO2 + NADH. Its pathway is amino-acid biosynthesis; L-leucine biosynthesis; L-leucine from 3-methyl-2-oxobutanoate: step 3/4. Functionally, catalyzes the oxidation of 3-carboxy-2-hydroxy-4-methylpentanoate (3-isopropylmalate) to 3-carboxy-4-methyl-2-oxopentanoate. The product decarboxylates to 4-methyl-2 oxopentanoate. The protein is 3-isopropylmalate dehydrogenase of Trichormus variabilis (strain ATCC 29413 / PCC 7937) (Anabaena variabilis).